The sequence spans 208 residues: Protein GrpE (208 aa).

Over residues Met-1–Ala-25 the composition is skewed to basic and acidic residues. The tract at residues Met-1–Ser-38 is disordered. Residues Asn-29–Ser-38 are compositionally biased toward acidic residues.

It belongs to the GrpE family. As to quaternary structure, homodimer.

It is found in the cytoplasm. In terms of biological role, participates actively in the response to hyperosmotic and heat shock by preventing the aggregation of stress-denatured proteins, in association with DnaK and GrpE. It is the nucleotide exchange factor for DnaK and may function as a thermosensor. Unfolded proteins bind initially to DnaJ; upon interaction with the DnaJ-bound protein, DnaK hydrolyzes its bound ATP, resulting in the formation of a stable complex. GrpE releases ADP from DnaK; ATP binding to DnaK triggers the release of the substrate protein, thus completing the reaction cycle. Several rounds of ATP-dependent interactions between DnaJ, DnaK and GrpE are required for fully efficient folding. This chain is Protein GrpE, found in Clostridium perfringens (strain ATCC 13124 / DSM 756 / JCM 1290 / NCIMB 6125 / NCTC 8237 / Type A).